A 492-amino-acid polypeptide reads, in one-letter code: Ferruginol synthase (492 aa).

A helical membrane pass occupies residues 1-21 (MDPFPLVAAALFIAATWFITF). Cysteine 436 is a heme binding site.

This sequence belongs to the cytochrome P450 family. The cofactor is heme. In terms of tissue distribution, expressed in leaf glandular trichomes.

The protein localises to the membrane. The catalysed reaction is abieta-8,11,13-triene + reduced [NADPH--hemoprotein reductase] + O2 = ferruginol + oxidized [NADPH--hemoprotein reductase] + H2O + H(+). The enzyme catalyses ferruginol + reduced [NADPH--hemoprotein reductase] + O2 = 11-hydroxyferruginol + oxidized [NADPH--hemoprotein reductase] + H2O + H(+). It catalyses the reaction miltiradiene + 2 reduced [NADPH--hemoprotein reductase] + 2 O2 = 11-oxomiltiradiene + 2 oxidized [NADPH--hemoprotein reductase] + 3 H2O + 2 H(+). Its pathway is secondary metabolite biosynthesis; terpenoid biosynthesis. In terms of biological role, monooxygenase involved in the biosynthesis of labdane-related diterpenes natural products. Catalyzes the oxidation of abietatriene to produce ferruginol. Catalyzes the oxidation of ferruginol at C-12 to produce 11-hydroxyferruginol. Ferruginol and 11-hydroxyferruginol are intermediates in the biosynthesis of carnosate, a potent antioxidant. May also convert miltiradiene into 11-oxomiltiradiene. In Salvia fruticosa (Greek sage), this protein is Ferruginol synthase.